The primary structure comprises 387 residues: 3-ketoacyl-CoA thiolase (387 aa).

The active-site Acyl-thioester intermediate is the cysteine 91. Residues histidine 343 and cysteine 373 each act as proton acceptor in the active site.

The protein belongs to the thiolase-like superfamily. Thiolase family. Heterotetramer of two alpha chains (FadB) and two beta chains (FadA).

The protein localises to the cytoplasm. It carries out the reaction an acyl-CoA + acetyl-CoA = a 3-oxoacyl-CoA + CoA. It functions in the pathway lipid metabolism; fatty acid beta-oxidation. Catalyzes the final step of fatty acid oxidation in which acetyl-CoA is released and the CoA ester of a fatty acid two carbons shorter is formed. The chain is 3-ketoacyl-CoA thiolase from Shigella dysenteriae serotype 1 (strain Sd197).